A 593-amino-acid polypeptide reads, in one-letter code: NADH-quinone oxidoreductase subunit C/D (593 aa).

The segment at M1 to Q184 is NADH dehydrogenase I subunit C. Residues D208–R593 form an NADH dehydrogenase I subunit D region.

It in the N-terminal section; belongs to the complex I 30 kDa subunit family. The protein in the C-terminal section; belongs to the complex I 49 kDa subunit family. In terms of assembly, NDH-1 is composed of 13 different subunits. Subunits NuoB, CD, E, F, and G constitute the peripheral sector of the complex.

It is found in the cell inner membrane. It carries out the reaction a quinone + NADH + 5 H(+)(in) = a quinol + NAD(+) + 4 H(+)(out). NDH-1 shuttles electrons from NADH, via FMN and iron-sulfur (Fe-S) centers, to quinones in the respiratory chain. The immediate electron acceptor for the enzyme in this species is believed to be ubiquinone. Couples the redox reaction to proton translocation (for every two electrons transferred, four hydrogen ions are translocated across the cytoplasmic membrane), and thus conserves the redox energy in a proton gradient. In Pseudomonas syringae pv. tomato (strain ATCC BAA-871 / DC3000), this protein is NADH-quinone oxidoreductase subunit C/D.